A 451-amino-acid polypeptide reads, in one-letter code: UPF0210 protein lin0538 (451 aa).

The protein belongs to the UPF0210 family. As to quaternary structure, homodimer.

The polypeptide is UPF0210 protein lin0538 (Listeria innocua serovar 6a (strain ATCC BAA-680 / CLIP 11262)).